A 274-amino-acid polypeptide reads, in one-letter code: Glutamate racemase (274 aa).

Substrate contacts are provided by residues 10 to 11 (DS) and 42 to 43 (YG). Cys-73 serves as the catalytic Proton donor/acceptor. 74–75 (NT) is a substrate binding site. Cys-184 (proton donor/acceptor) is an active-site residue. 185 to 186 (TH) provides a ligand contact to substrate.

This sequence belongs to the aspartate/glutamate racemases family.

The catalysed reaction is L-glutamate = D-glutamate. Its pathway is cell wall biogenesis; peptidoglycan biosynthesis. Functionally, provides the (R)-glutamate required for cell wall biosynthesis. This is Glutamate racemase from Latilactobacillus sakei subsp. sakei (strain 23K) (Lactobacillus sakei subsp. sakei).